We begin with the raw amino-acid sequence, 265 residues long: MGYFKRVLLYIIVMVLSVFIIGCDKSSDTSEKSKGDSKEAQIKKSFAKTLDMYPTENLEDFYDKEGYRDGKFKKGDKGTWVIRSEMTTELKNENMVSKGMVIRLNRNSRTCTGEYFVRIVKEDSEGKVYSDERKYPVKMENNKIIPLKPIDDEKVKKEIEEFKFFVQYGNFKELENYKDGEVTYNPEAPIYSAQYQLKNSDYNVEQLRKRYNIPTQKAPKLLLKGSGNLKGSSVGYKNIEFTFVENKEENIYFTDSVYFNPSEDK.

The signal sequence occupies residues 1-22 (MGYFKRVLLYIIVMVLSVFIIG). Cys-23 carries N-palmitoyl cysteine lipidation. Residue Cys-23 is the site of S-diacylglycerol cysteine attachment.

Belongs to the staphylococcal tandem lipoprotein family.

The protein localises to the cell membrane. This is an uncharacterized protein from Staphylococcus aureus (strain MSSA476).